The following is a 247-amino-acid chain: 23S rRNA (guanosine-2'-O-)-methyltransferase RlmB (247 aa).

Residues Gly-197, Ile-217, and Leu-226 each contribute to the S-adenosyl-L-methionine site.

The protein belongs to the class IV-like SAM-binding methyltransferase superfamily. RNA methyltransferase TrmH family. RlmB subfamily.

It is found in the cytoplasm. The catalysed reaction is guanosine(2251) in 23S rRNA + S-adenosyl-L-methionine = 2'-O-methylguanosine(2251) in 23S rRNA + S-adenosyl-L-homocysteine + H(+). In terms of biological role, specifically methylates the ribose of guanosine 2251 in 23S rRNA. The sequence is that of 23S rRNA (guanosine-2'-O-)-methyltransferase RlmB from Vibrio parahaemolyticus serotype O3:K6 (strain RIMD 2210633).